The primary structure comprises 430 residues: Asparagine--tRNA ligase (430 aa).

This sequence belongs to the class-II aminoacyl-tRNA synthetase family. As to quaternary structure, homodimer.

The protein localises to the cytoplasm. The catalysed reaction is tRNA(Asn) + L-asparagine + ATP = L-asparaginyl-tRNA(Asn) + AMP + diphosphate + H(+). This chain is Asparagine--tRNA ligase, found in Listeria monocytogenes serotype 4b (strain F2365).